The sequence spans 251 residues: Diphthine synthase (251 aa).

Residues Leu-9, Asp-85, Val-88, Ser-113–Ile-114, Leu-165, Ala-202, and His-227 contribute to the S-adenosyl-L-methionine site.

It belongs to the diphthine synthase family. In terms of assembly, homodimer.

It catalyses the reaction 2-[(3S)-amino-3-carboxypropyl]-L-histidyl-[translation elongation factor 2] + 3 S-adenosyl-L-methionine = diphthine-[translation elongation factor 2] + 3 S-adenosyl-L-homocysteine + 3 H(+). It participates in protein modification; peptidyl-diphthamide biosynthesis. In terms of biological role, S-adenosyl-L-methionine-dependent methyltransferase that catalyzes the trimethylation of the amino group of the modified target histidine residue in translation elongation factor 2 (EF-2), to form an intermediate called diphthine. The three successive methylation reactions represent the second step of diphthamide biosynthesis. This chain is Diphthine synthase, found in Methanosphaerula palustris (strain ATCC BAA-1556 / DSM 19958 / E1-9c).